Here is a 256-residue protein sequence, read N- to C-terminus: Thiazole synthase (256 aa).

Catalysis depends on Lys-95, which acts as the Schiff-base intermediate with DXP. 1-deoxy-D-xylulose 5-phosphate-binding positions include Gly-156, Ala-182–Gly-183, and Asn-204–Thr-205.

This sequence belongs to the ThiG family. In terms of assembly, homotetramer. Forms heterodimers with either ThiH or ThiS.

The protein resides in the cytoplasm. The catalysed reaction is [ThiS sulfur-carrier protein]-C-terminal-Gly-aminoethanethioate + 2-iminoacetate + 1-deoxy-D-xylulose 5-phosphate = [ThiS sulfur-carrier protein]-C-terminal Gly-Gly + 2-[(2R,5Z)-2-carboxy-4-methylthiazol-5(2H)-ylidene]ethyl phosphate + 2 H2O + H(+). It participates in cofactor biosynthesis; thiamine diphosphate biosynthesis. In terms of biological role, catalyzes the rearrangement of 1-deoxy-D-xylulose 5-phosphate (DXP) to produce the thiazole phosphate moiety of thiamine. Sulfur is provided by the thiocarboxylate moiety of the carrier protein ThiS. In vitro, sulfur can be provided by H(2)S. In Escherichia coli O157:H7, this protein is Thiazole synthase.